Reading from the N-terminus, the 383-residue chain is Photosynthetic reaction center cytochrome c subunit (383 aa).

The first 22 residues, 1 to 22 (MNLGKQLTLPAVAVVASVVLLG), serve as a signal peptide directing secretion. Cys23 carries the N-palmitoyl cysteine lipid modification. Cys23 carries the S-diacylglycerol cysteine lipid modification. Heme-binding residues include Met94, Cys107, Cys110, His111, Met130, His144, Cys152, Cys155, His156, Met236, Cys247, Cys250, His251, Cys307, Cys310, and His311. A disordered region spans residues 335 to 383 (PAEAAPATEEAPAAEAEAVEAAPVEEAAPAPVEQAAAPVEDAAPAPQQL).

As to quaternary structure, component of the photosynthetic reaction center composed of protein subunits L (PufL), M (PufM), H (PuhA) and cytochrome C (PufC). The reaction center interacts with light-harvesting antenna complex LH1. Binds 4 heme groups per subunit.

It is found in the cellular chromatophore membrane. Its function is as follows. The reaction center of purple bacteria contains a tightly bound cytochrome molecule which re-reduces the photo oxidized primary electron donor. The sequence is that of Photosynthetic reaction center cytochrome c subunit (pufC) from Allochromatium vinosum (strain ATCC 17899 / DSM 180 / NBRC 103801 / NCIMB 10441 / D) (Chromatium vinosum).